The sequence spans 691 residues: Methionine--tRNA ligase (691 aa).

A 'HIGH' region motif is present at residues 12–22; that stretch reads PYANGSFHIGH. Residues Cys143, Cys146, Cys156, and Cys159 each coordinate Zn(2+). The 'KMSKS' region motif lies at 341 to 345; the sequence is KMSKS. Lys344 contributes to the ATP binding site. A tRNA-binding domain is found at 585–691; that stretch reads DFVKVDLRIA…PGAQPGMRIH (107 aa).

The protein belongs to the class-I aminoacyl-tRNA synthetase family. MetG type 1 subfamily. As to quaternary structure, homodimer. Zn(2+) serves as cofactor.

It localises to the cytoplasm. It catalyses the reaction tRNA(Met) + L-methionine + ATP = L-methionyl-tRNA(Met) + AMP + diphosphate. Its function is as follows. Is required not only for elongation of protein synthesis but also for the initiation of all mRNA translation through initiator tRNA(fMet) aminoacylation. In Bordetella avium (strain 197N), this protein is Methionine--tRNA ligase.